We begin with the raw amino-acid sequence, 447 residues long: Mannose/glucose-specific lectin (447 aa).

3 repeat units span residues 1–149 (SLKG…VQPV), 150–295 (PHGT…VKPR), and 296–447 (DVEG…DTAV). Positions 1–447 (SLKGMISVGP…GIFVKPDTAV (447 aa)) are 3 X approximate tandem repeats. Jacalin-type lectin domains lie at 5 to 148 (MISV…FVQP), 153 to 294 (TISF…YVKP), and 300 to 443 (SISI…FVKP).

Belongs to the jacalin lectin family. In terms of assembly, homodimer. The N-terminus is blocked.

Mannose/glucose specific lectin. Shows agglutinating activity against rabbit erythrocytes. The sequence is that of Mannose/glucose-specific lectin from Parkia platycephala.